Reading from the N-terminus, the 347-residue chain is MNSLVTQYAAPLFERYPQLHDYLPTLERPFFNISLWEHFDDVVTRVTNGRFVPSEFQFIAGELPLSTLPPVLYAITAYYVIIFGGRFLLSKSKPFKLNGLFQLHNLVLTSLSLTLLLLMVEQLVPIIVQHGLYFAICNIGAWTQPLVTLYYMNYIVKFIEFIDTFFLVLKHKKLTFLHTYHHGATALLCYTQLMGTTSISWVPISLNLGVHVVMYWYYFLAARGIRVWWKEWVTRFQIIQFVLDIGFIYFAVYQKAVHLYFPILPHCGDCVGSTTATFAGCAIISSYLVLFISFYINVYKRKGTKTSRVVKRAHGGVAAKVNEYVNVDLKNVPTPSPSPKPQHRRKR.

The Lumenal segment spans residues 1–62 (MNSLVTQYAA…PSEFQFIAGE (62 aa)). N-linked (GlcNAc...) asparagine glycosylation is present at N32. A helical transmembrane segment spans residues 63–83 (LPLSTLPPVLYAITAYYVIIF). Residues 84–96 (GGRFLLSKSKPFK) lie on the Cytoplasmic side of the membrane. Residues 97-119 (LNGLFQLHNLVLTSLSLTLLLLM) form a helical membrane-spanning segment. At 120–122 (VEQ) the chain is on the lumenal side. Residues 123 to 142 (LVPIIVQHGLYFAICNIGAW) traverse the membrane as a helical segment. Residues 143–146 (TQPL) lie on the Cytoplasmic side of the membrane. The helical transmembrane segment at 147–169 (VTLYYMNYIVKFIEFIDTFFLVL) threads the bilayer. Topologically, residues 170 to 200 (KHKKLTFLHTYHHGATALLCYTQLMGTTSIS) are lumenal. Positions 178-182 (HTYHH) match the HxxHH motif motif. Residues 201–221 (WVPISLNLGVHVVMYWYYFLA) traverse the membrane as a helical segment. Over 222-231 (ARGIRVWWKE) the chain is Cytoplasmic. The helical transmembrane segment at 232–254 (WVTRFQIIQFVLDIGFIYFAVYQ) threads the bilayer. At 255–275 (KAVHLYFPILPHCGDCVGSTT) the chain is on the lumenal side. The chain crosses the membrane as a helical span at residues 276-296 (ATFAGCAIISSYLVLFISFYI). At 297–347 (NVYKRKGTKTSRVVKRAHGGVAAKVNEYVNVDLKNVPTPSPSPKPQHRRKR) the chain is on the cytoplasmic side. T334 carries the phosphothreonine modification. Phosphoserine is present on residues S336 and S338. Residues 344-347 (RRKR) carry the Di-lysine-like motif motif.

Belongs to the ELO family.

Its subcellular location is the endoplasmic reticulum membrane. The enzyme catalyses a very-long-chain acyl-CoA + malonyl-CoA + H(+) = a very-long-chain 3-oxoacyl-CoA + CO2 + CoA. It catalyses the reaction octadecanoyl-CoA + malonyl-CoA + H(+) = 3-oxoeicosanoyl-CoA + CO2 + CoA. It carries out the reaction hexadecanoyl-CoA + malonyl-CoA + H(+) = 3-oxooctadecanoyl-CoA + CO2 + CoA. The catalysed reaction is eicosanoyl-CoA + malonyl-CoA + H(+) = 3-oxodocosanoyl-CoA + CO2 + CoA. The enzyme catalyses docosanoyl-CoA + malonyl-CoA + H(+) = 3-oxotetracosanoyl-CoA + CO2 + CoA. Component of a microsomal membrane-bound long-chain fatty acid elongation system, which produces the 20-26-carbon very long-chain fatty acids (VLCFA) from long-chain fatty acid precursors and is involved ceramide and inositol sphingolipid biosynthesis. Component of elongase II, which elongates 16-18 carbon fatty acyl-CoAs such as palmitoyl-CoA and stearoyl-CoA to 20-22-carbon fatty acids by incorporation of malonyl-CoA. Involved in the synthesis of 1,3-beta-glucan. The enzymes active site faces the cytosol, whereas VLCFA length is determined by a lysine near the luminal end of transmembrane helix 6. Plays an important role in lipotoxic cell death induced by oleic acid through maintaining a balanced fatty acid composition in thr plasma membrane. This Saccharomyces cerevisiae (strain ATCC 204508 / S288c) (Baker's yeast) protein is Fatty acid elongase 2.